Here is a 159-residue protein sequence, read N- to C-terminus: Protein hunchback (159 aa).

Basic residues predominate over residues 18–34 (HNHHHHHHHGHHQHQQR). Disordered regions lie at residues 18-49 (HNHH…QSPL) and 119-159 (LTPP…KYMA). A compositionally biased stretch (basic and acidic residues) spans 140-159 (EPEKEHDLMSNSSEDMKYMA).

This sequence belongs to the hunchback C2H2-type zinc-finger protein family.

It is found in the nucleus. In terms of biological role, gap class segmentation protein that controls development of head structures. This is Protein hunchback (hb) from Drosophila soonae (Fruit fly).